The sequence spans 602 residues: Potassium-transporting ATPase potassium-binding subunit (602 aa).

Transmembrane regions (helical) follow at residues 5-25 (AMLQLGLFLVVLIALAWPLGA), 65-85 (GYAVALILFNVLGVAAVYALQ), 136-156 (GLTVQNFVSAATGAAVVIALI), and 179-199 (LYVLLPLAVVFALVFTQQGAI). A disordered region spans residues 221 to 248 (QDAKGNPVLGKDGKPVMEDKTSQTQTLP). Residues 231 to 241 (KDGKPVMEDKT) show a composition bias toward basic and acidic residues. The next 6 membrane-spanning stretches (helical) occupy residues 283–303 (LANFLQDIAIFLIPAALCFLF), 312–332 (QGWAILAAMTIMFATAVVVET), 419–439 (GLYGMLIFAILAVFIAGLMVG), 458–478 (AITILVTPTLVLALTAIAVSL), 523–543 (IMTGLAMFFGRFFMIVPILAI), and 566–586 (LFVTLLIGTVLLVGALNYVPA).

This sequence belongs to the KdpA family. The system is composed of three essential subunits: KdpA, KdpB and KdpC.

Its subcellular location is the cell inner membrane. Functionally, part of the high-affinity ATP-driven potassium transport (or Kdp) system, which catalyzes the hydrolysis of ATP coupled with the electrogenic transport of potassium into the cytoplasm. This subunit binds the periplasmic potassium ions and delivers the ions to the membrane domain of KdpB through an intramembrane tunnel. This Chromobacterium violaceum (strain ATCC 12472 / DSM 30191 / JCM 1249 / CCUG 213 / NBRC 12614 / NCIMB 9131 / NCTC 9757 / MK) protein is Potassium-transporting ATPase potassium-binding subunit.